The chain runs to 518 residues: Wax ester synthase/diacylglycerol acyltransferase 6 (518 aa).

The span at 1-17 (MEIKTRRDTSETSVRKD) shows a compositional bias: basic and acidic residues. The interval 1 to 29 (MEIKTRRDTSETSVRKDDEEEVEEEQPLS) is disordered. Residues 1–213 (MEIKTRRDTS…LMAGSRGDSR (213 aa)) are Cytoplasmic-facing. Histidine 163 functions as the Proton acceptor in the catalytic mechanism. Residues 185–205 (PDELPSLPNQNRSSSRSSRLM) form a disordered region. The chain crosses the membrane as a helical span at residues 214 to 234 (FLWLVMVIWSAIMLVLNTVCD). Residues 235–518 (ALEFIATTMF…VQERDSRSLD (284 aa)) are Lumenal-facing. Asparagine 430 is a glycosylation site (N-linked (GlcNAc...) asparagine).

This sequence in the N-terminal section; belongs to the long-chain O-acyltransferase family. Expressed in roots, stems, leaves, flowers and siliques.

It is found in the cell membrane. Its subcellular location is the endoplasmic reticulum membrane. The protein localises to the golgi apparatus membrane. The enzyme catalyses an acyl-CoA + a 1,2-diacyl-sn-glycerol = a triacyl-sn-glycerol + CoA. The catalysed reaction is a long chain fatty alcohol + a fatty acyl-CoA = a wax ester + CoA. Its pathway is glycerolipid metabolism; triacylglycerol biosynthesis. It functions in the pathway lipid metabolism. In terms of biological role, bifunctional wax ester synthase/diacylglycerol acyltransferase that uses acyl-CoAs with 16, 18 and 20 carbons as substrates, preferably in combination with 16:0ol alcohol. Involved in cuticular wax biosynthesis. The protein is Wax ester synthase/diacylglycerol acyltransferase 6 of Arabidopsis thaliana (Mouse-ear cress).